The following is a 62-amino-acid chain: Large ribosomal subunit protein uL29 (62 aa).

This sequence belongs to the universal ribosomal protein uL29 family.

This is Large ribosomal subunit protein uL29 from Vesicomyosocius okutanii subsp. Calyptogena okutanii (strain HA).